Consider the following 1483-residue polypeptide: Heme-responsive zinc finger transcription factor HAP1 (1483 aa).

A compositionally biased stretch (polar residues) spans 1–50; that stretch reads MSNTPYNSSVPSIASMTQSSVSRSPNMHTATTPGANTSSNSPPLHMSSDS. The tract at residues 1-56 is disordered; that stretch reads MSNTPYNSSVPSIASMTQSSVSRSPNMHTATTPGANTSSNSPPLHMSSDSSKIKRK. Zn(2+)-binding residues include Cys64, Cys67, Cys74, Cys81, Cys84, and Cys93. A DNA-binding region (zn(2)-C6 fungal-type) is located at residues 64-93; the sequence is CTICRKRKVKCDKLRPHCQQCTKTGVAHLC. The stretch at 105-134 forms a coiled coil; sequence EKELLKDNELKKLRERVKSLEKTLSKVHSS. Polar residues predominate over residues 162 to 176; sequence VNANTGSASSASHMH. Residues 162–208 are disordered; it reads VNANTGSASSASHMHQQQQQQQQQEQQQDFSRSANANANSSSLSISN. Low complexity predominate over residues 177–208; that stretch reads QQQQQQQQQEQQQDFSRSANANANSSSLSISN. The heme-responsive; required for HMC formation stretch occupies residues 244–444; sequence KGDPYLKLLW…NTIPHHQPQS (201 aa). 6 HRM repeats span residues 280 to 285, 299 to 304, 323 to 328, 347 to 352, 389 to 394, and 415 to 420; these read KCPINH, KCPVDH, RCPVDH, and RCPIDH. Polar residues-rich tracts occupy residues 432 to 447 and 706 to 734; these read STHN…SGSH and QLNA…NPTL. Disordered stretches follow at residues 432–458 and 706–767; these read STHN…NRKH and QLNA…KENQ. A compositionally biased stretch (low complexity) spans 735–759; the sequence is NNNMSAATTNSSSRSGSADSRSGSN. Residues 1192-1197 form an HRM 7 repeat; it reads KCPVYQ. The disordered stretch occupies residues 1384–1411; that stretch reads TANTDTSANGSALSTLTSPQGSDLASNS. The span at 1388-1411 shows a compositional bias: polar residues; that stretch reads DTSANGSALSTLTSPQGSDLASNS.

As to quaternary structure, binds DNA as a homodimer. Interacts with SRO9 and YDJ1. In the absence of heme, binds to at least four cellular proteins, including YDJ1 and SRO9, forming a high-molecular-weight complex (HMC) which results in repression of its activity and dictates its DNA-binding specificity.

The protein localises to the nucleus. Regulation of oxygen dependent gene expression. It modulates the expression of Iso-1 (CYP1) and Iso-2 (CYP3) cytochrome c. In response to heme, promotes transcription of genes encoding functions required for respiration, controlling oxidative damage and repression of anaerobic genes. Binds to the sequence 5'-CGGNNNTNNCGG-3'. The protein is Heme-responsive zinc finger transcription factor HAP1 (HAP1) of Saccharomyces cerevisiae (strain RM11-1a) (Baker's yeast).